Reading from the N-terminus, the 166-residue chain is Protein FAM163B (166 aa).

The chain crosses the membrane as a helical span at residues 6–26 (VVITGGILATVILLCIIAVLC). Serine 40 carries the post-translational modification Phosphoserine.

It belongs to the FAM163 family.

The protein resides in the membrane. In Homo sapiens (Human), this protein is Protein FAM163B (FAM163B).